Consider the following 81-residue polypeptide: ATP synthase subunit c (81 aa).

A run of 2 helical transmembrane segments spans residues 5–25 and 57–77; these read IAAG…IGAG and VGLV…FVFA.

The protein belongs to the ATPase C chain family. F-type ATPases have 2 components, F(1) - the catalytic core - and F(0) - the membrane proton channel. F(1) has five subunits: alpha(3), beta(3), gamma(1), delta(1), epsilon(1). F(0) has three main subunits: a(1), b(2) and c(10-14). The alpha and beta chains form an alternating ring which encloses part of the gamma chain. F(1) is attached to F(0) by a central stalk formed by the gamma and epsilon chains, while a peripheral stalk is formed by the delta and b chains.

Its subcellular location is the cell membrane. In terms of biological role, f(1)F(0) ATP synthase produces ATP from ADP in the presence of a proton or sodium gradient. F-type ATPases consist of two structural domains, F(1) containing the extramembraneous catalytic core and F(0) containing the membrane proton channel, linked together by a central stalk and a peripheral stalk. During catalysis, ATP synthesis in the catalytic domain of F(1) is coupled via a rotary mechanism of the central stalk subunits to proton translocation. Key component of the F(0) channel; it plays a direct role in translocation across the membrane. A homomeric c-ring of between 10-14 subunits forms the central stalk rotor element with the F(1) delta and epsilon subunits. The sequence is that of ATP synthase subunit c from Mycobacterium bovis (strain ATCC BAA-935 / AF2122/97).